Consider the following 29-residue polypeptide: FENKVPEKQKLFQEDNGIPVVLKGGVADA.

K10 is modified (N6-acetyllysine).

It belongs to the cytochrome c oxidase VIIa family. In terms of assembly, component of the cytochrome c oxidase (complex IV, CIV), a multisubunit enzyme composed of 14 subunits. The complex is composed of a catalytic core of 3 subunits MT-CO1, MT-CO2 and MT-CO3, encoded in the mitochondrial DNA, and 11 supernumerary subunits COX4I, COX5A, COX5B, COX6A, COX6B, COX6C, COX7A, COX7B, COX7C, COX8 and NDUFA4, which are encoded in the nuclear genome. The complex exists as a monomer or a dimer and forms supercomplexes (SCs) in the inner mitochondrial membrane with NADH-ubiquinone oxidoreductase (complex I, CI) and ubiquinol-cytochrome c oxidoreductase (cytochrome b-c1 complex, complex III, CIII), resulting in different assemblies (supercomplex SCI(1)III(2)IV(1) and megacomplex MCI(2)III(2)IV(2)). Interacts with PET100.

The protein resides in the mitochondrion inner membrane. It participates in energy metabolism; oxidative phosphorylation. Component of the cytochrome c oxidase, the last enzyme in the mitochondrial electron transport chain which drives oxidative phosphorylation. The respiratory chain contains 3 multisubunit complexes succinate dehydrogenase (complex II, CII), ubiquinol-cytochrome c oxidoreductase (cytochrome b-c1 complex, complex III, CIII) and cytochrome c oxidase (complex IV, CIV), that cooperate to transfer electrons derived from NADH and succinate to molecular oxygen, creating an electrochemical gradient over the inner membrane that drives transmembrane transport and the ATP synthase. Cytochrome c oxidase is the component of the respiratory chain that catalyzes the reduction of oxygen to water. Electrons originating from reduced cytochrome c in the intermembrane space (IMS) are transferred via the dinuclear copper A center (CU(A)) of subunit 2 and heme A of subunit 1 to the active site in subunit 1, a binuclear center (BNC) formed by heme A3 and copper B (CU(B)). The BNC reduces molecular oxygen to 2 water molecules using 4 electrons from cytochrome c in the IMS and 4 protons from the mitochondrial matrix. This is Cytochrome c oxidase subunit 7A2, mitochondrial (COX7A2) from Canis lupus familiaris (Dog).